The primary structure comprises 282 residues: NADPH-dependent 7-cyano-7-deazaguanine reductase (282 aa).

88–90 (IES) provides a ligand contact to substrate. 90–91 (SK) contributes to the NADPH binding site. The active-site Thioimide intermediate is the Cys190. The Proton donor role is filled by Asp197. Substrate is bound at residue 229 to 230 (HE). Residue 258 to 259 (RG) coordinates NADPH.

The protein belongs to the GTP cyclohydrolase I family. QueF type 2 subfamily. In terms of assembly, homodimer.

It is found in the cytoplasm. The catalysed reaction is 7-aminomethyl-7-carbaguanine + 2 NADP(+) = 7-cyano-7-deazaguanine + 2 NADPH + 3 H(+). The protein operates within tRNA modification; tRNA-queuosine biosynthesis. Catalyzes the NADPH-dependent reduction of 7-cyano-7-deazaguanine (preQ0) to 7-aminomethyl-7-deazaguanine (preQ1). The chain is NADPH-dependent 7-cyano-7-deazaguanine reductase from Escherichia coli (strain K12 / MC4100 / BW2952).